The chain runs to 164 residues: Thiol peroxidase (164 aa).

One can recognise a Thioredoxin domain in the interval 18–163; the sequence is VSEGQHAPDF…FDAALEAYRN (146 aa). Cys-60 serves as the catalytic Cysteine sulfenic acid (-SOH) intermediate. The cysteines at positions 60 and 93 are disulfide-linked.

It belongs to the peroxiredoxin family. Tpx subfamily. Homodimer.

It carries out the reaction a hydroperoxide + [thioredoxin]-dithiol = an alcohol + [thioredoxin]-disulfide + H2O. Functionally, thiol-specific peroxidase that catalyzes the reduction of hydrogen peroxide and organic hydroperoxides to water and alcohols, respectively. Plays a role in cell protection against oxidative stress by detoxifying peroxides. In Staphylococcus haemolyticus (strain JCSC1435), this protein is Thiol peroxidase.